We begin with the raw amino-acid sequence, 643 residues long: SURP and G-patch domain-containing protein 1 (643 aa).

2 disordered regions span residues 48–69 (ARME…HPGE) and 97–119 (KAQT…SSLK). A Phosphothreonine modification is found at Thr-128. The SURP motif 1 repeat unit spans residues 187-229 (VIEKLARFVAEGGPELEKVAMEDYKDNPAFTFLHDKNSREFLY). Phosphoserine is present on Ser-252. The SURP motif 2 repeat unit spans residues 262–305 (LAEKLARFIADGGPEVETIALQNNRENQAFSFLYDPNSQGYRYY). Disordered regions lie at residues 316–335 (KAGS…LRRK) and 360–393 (AVNP…DKVE). The residue at position 322 (Ser-322) is a Phosphoserine. Positions 378–384 (KRKRKSR) match the Nuclear localization signal motif. A phosphoserine mark is found at Ser-407, Ser-409, Ser-412, and Ser-483. In terms of domain architecture, G-patch spans 560-607 (VENIGYQMLMKMGWKEGEGLGTEGQGIKNPVNKGATTIDGAGFGIDRP).

As to quaternary structure, component of the spliceosome.

It is found in the nucleus. Its function is as follows. Plays a role in pre-mRNA splicing. In Mus musculus (Mouse), this protein is SURP and G-patch domain-containing protein 1 (Sugp1).